The primary structure comprises 564 residues: Probable diguanylate cyclase DgcQ (564 aa).

A run of 2 helical transmembrane segments spans residues 20–40 (LGPG…STLL) and 360–380 (IALT…WYVI). The 136-residue stretch at 428 to 563 (HPFSVIQVDL…GRNRVFASDN (136 aa)) folds into the GGDEF domain. Asp-436 serves as a coordination point for Mg(2+). Substrate contacts are provided by Asn-444, His-449, and Asp-453. Glu-479 provides a ligand contact to Mg(2+). The Proton acceptor role is filled by Glu-479.

Homodimer. The cofactor is Mg(2+).

It is found in the cell inner membrane. The enzyme catalyses 2 GTP = 3',3'-c-di-GMP + 2 diphosphate. It participates in glycan metabolism; bacterial cellulose biosynthesis. The protein operates within purine metabolism; 3',5'-cyclic di-GMP biosynthesis. Functionally, catalyzes the synthesis of cyclic-di-GMP (c-di-GMP) via the condensation of 2 GTP molecules. Cyclic-di-GMP is a second messenger which controls cell surface-associated traits in bacteria. Involved in the regulation of cellulose production. The chain is Probable diguanylate cyclase DgcQ from Escherichia coli (strain K12).